The following is a 124-amino-acid chain: Nascent polypeptide-associated complex protein (124 aa).

Residues 7-74 enclose the NAC-A/B domain; sequence GLNPRKMKQM…PESRERGDSG (68 aa). The interval 53–124 is disordered; the sequence is AQGQQTYQVV…DLAAAVQKLE (72 aa). Acidic residues predominate over residues 74–93; it reads GSEDDSETESGGEFSEDDVE.

The protein belongs to the NAC-alpha family. As to quaternary structure, homodimer. Interacts with the ribosome. Binds ribosomal RNA.

Functionally, contacts the emerging nascent chain on the ribosome. This is Nascent polypeptide-associated complex protein from Natronomonas pharaonis (strain ATCC 35678 / DSM 2160 / CIP 103997 / JCM 8858 / NBRC 14720 / NCIMB 2260 / Gabara) (Halobacterium pharaonis).